A 1517-amino-acid chain; its full sequence is Neurite extension and migration factor (1517 aa).

The span at 381-405 (DKKKGKEEVHEDKSIEKKDEKDNGE) shows a compositional bias: basic and acidic residues. Disordered regions lie at residues 381 to 416 (DKKK…PCSG), 505 to 529 (VNER…PKKR), 644 to 697 (SMEA…GLIG), 732 to 775 (KKIK…HMSE), 1065 to 1084 (RHSS…SPQS), 1161 to 1228 (DEPA…KKGK), and 1372 to 1422 (AGTP…SSED). The span at 644-663 (SMEASASSKQVSFGSDQKQA) shows a compositional bias: polar residues. The segment covering 678–687 (SALLAAPSSA) has biased composition (low complexity). The segment covering 764–773 (TPGTSNSSHM) has biased composition (polar residues).

It localises to the nucleus. The protein resides in the cytoplasm. In terms of biological role, involved in neurite outgrowth by regulating cell-cell adhesion via the N-cadherin signaling pathway. May act by regulating expression of protein-coding genes, such as N-cadherins and integrin beta-1 (ITGB1). This is Neurite extension and migration factor from Rattus norvegicus (Rat).